We begin with the raw amino-acid sequence, 208 residues long: Putative archaetidylserine decarboxylase proenzyme (208 aa).

The Schiff-base intermediate with substrate; via pyruvic acid role is filled by Ser-172. Ser-172 is subject to Pyruvic acid (Ser); by autocatalysis.

Belongs to the phosphatidylserine decarboxylase family. PSD-A subfamily. In terms of assembly, heterodimer of a large membrane-associated beta subunit and a small pyruvoyl-containing alpha subunit. The cofactor is pyruvate. Post-translationally, is synthesized initially as an inactive proenzyme. Formation of the active enzyme involves a self-maturation process in which the active site pyruvoyl group is generated from an internal serine residue via an autocatalytic post-translational modification. Two non-identical subunits are generated from the proenzyme in this reaction, and the pyruvate is formed at the N-terminus of the alpha chain, which is derived from the carboxyl end of the proenzyme. The post-translation cleavage follows an unusual pathway, termed non-hydrolytic serinolysis, in which the side chain hydroxyl group of the serine supplies its oxygen atom to form the C-terminus of the beta chain, while the remainder of the serine residue undergoes an oxidative deamination to produce ammonia and the pyruvoyl prosthetic group on the alpha chain.

It localises to the cell membrane. The enzyme catalyses archaetidylserine + H(+) = archaetidylethanolamine + CO2. Catalyzes the formation of archaetidylethanolamine (PtdEtn) from archaetidylserine (PtdSer). This is Putative archaetidylserine decarboxylase proenzyme from Methanosarcina mazei (strain ATCC BAA-159 / DSM 3647 / Goe1 / Go1 / JCM 11833 / OCM 88) (Methanosarcina frisia).